The primary structure comprises 777 residues: Lon protease (777 aa).

The 194-residue stretch at 11-204 (IPVLPLRDVV…FLMAIMESEI (194 aa)) folds into the Lon N-terminal domain. 356 to 363 (GPPGVGKT) is a binding site for ATP. Residues 592–773 (TNQIGQVIGL…EEVLKLSLEK (182 aa)) enclose the Lon proteolytic domain. Residues Ser679 and Lys722 contribute to the active site.

This sequence belongs to the peptidase S16 family. Homohexamer. Organized in a ring with a central cavity.

Its subcellular location is the cytoplasm. It carries out the reaction Hydrolysis of proteins in presence of ATP.. ATP-dependent serine protease that mediates the selective degradation of mutant and abnormal proteins as well as certain short-lived regulatory proteins. Required for cellular homeostasis and for survival from DNA damage and developmental changes induced by stress. Degrades polypeptides processively to yield small peptide fragments that are 5 to 10 amino acids long. Binds to DNA in a double-stranded, site-specific manner. The sequence is that of Lon protease from Buchnera aphidicola subsp. Acyrthosiphon pisum (strain APS) (Acyrthosiphon pisum symbiotic bacterium).